Consider the following 195-residue polypeptide: Thymidine kinase (195 aa).

ATP is bound by residues 15-22 (GSMFSGKS) and 88-91 (DEVQ). The active-site Proton acceptor is Glu89. Substrate is bound at residue Phe120. Zn(2+) is bound by residues Cys145 and Cys148. Substrate contacts are provided by residues 170 to 174 (IILVG) and Tyr179. Positions 183 and 186 each coordinate Zn(2+).

The protein belongs to the thymidine kinase family. As to quaternary structure, homotetramer.

It is found in the cytoplasm. The enzyme catalyses thymidine + ATP = dTMP + ADP + H(+). The protein is Thymidine kinase of Bacillus cereus (strain ATCC 14579 / DSM 31 / CCUG 7414 / JCM 2152 / NBRC 15305 / NCIMB 9373 / NCTC 2599 / NRRL B-3711).